Here is a 328-residue protein sequence, read N- to C-terminus: Malate dehydrogenase (328 aa).

12 to 18 (GAAGQIG) is an NAD(+) binding site. Substrate contacts are provided by Arg95 and Arg101. NAD(+) is bound by residues Asn108, Gln115, and 132 to 134 (VGN). Asn134 and Arg165 together coordinate substrate. The Proton acceptor role is filled by His190.

The protein belongs to the LDH/MDH superfamily. MDH type 2 family.

The enzyme catalyses (S)-malate + NAD(+) = oxaloacetate + NADH + H(+). Its function is as follows. Catalyzes the reversible oxidation of malate to oxaloacetate. This chain is Malate dehydrogenase, found in Delftia acidovorans (strain DSM 14801 / SPH-1).